The chain runs to 1522 residues: Adhesion G protein-coupled receptor B3 (1522 aa).

Positions 1–25 are cleaved as a signal peptide; the sequence is MKAVRNLLIYIFSTYLLVMFGFNAA. At 26-880 the chain is on the extracellular side; that stretch reads QDFWCSTLVK…MESSGTPSVT (855 aa). One can recognise a CUB domain in the interval 30-159; sequence CSTLVKGVIY…KSFFEFLVLN (130 aa). Asparagine 51, asparagine 54, asparagine 82, asparagine 105, and asparagine 241 each carry an N-linked (GlcNAc...) asparagine glycan. TSP type-1 domains are found at residues 291–343, 345–398, 400–453, and 455–508; these read ESGV…ALCP, HGVW…ALCP, DGQW…PECT, and NGQW…QRCP. Intrachain disulfides connect cysteine 303–cysteine 336, cysteine 307–cysteine 342, cysteine 318–cysteine 326, cysteine 357–cysteine 392, cysteine 361–cysteine 397, cysteine 372–cysteine 382, cysteine 412–cysteine 447, cysteine 416–cysteine 452, cysteine 427–cysteine 437, cysteine 467–cysteine 502, cysteine 471–cysteine 507, cysteine 482–cysteine 492, cysteine 514–cysteine 549, and cysteine 537–cysteine 567. Asparagine 337 is a glycosylation site (N-linked (GlcNAc...) asparagine). An N-linked (GlcNAc...) asparagine glycan is attached at asparagine 418. An N-linked (GlcNAc...) asparagine glycan is attached at asparagine 540. Residue serine 619 is modified to Phosphoserine. Residues asparagine 625, asparagine 779, asparagine 812, and asparagine 828 are each glycosylated (N-linked (GlcNAc...) asparagine). Residues 693-869 form the GAIN-B domain; it reads QNSYLMTGNV…AILAQQPREI (177 aa). Intrachain disulfides connect cysteine 819/cysteine 851 and cysteine 839/cysteine 853. Residues 819-869 form a GPS region; the sequence is CVLWDDSKSNESLGTWSTQGCKTVLTDASHTKCLCDRLSTFAILAQQPREI. A helical transmembrane segment spans residues 881-901; that stretch reads LIVGSGLSCLALITLAVVYAA. The Cytoplasmic segment spans residues 902 to 910; sequence LWRYIRSER. Residues 911–931 form a helical membrane-spanning segment; that stretch reads SIILINFCLSIISSNILILVG. Topologically, residues 932–939 are extracellular; sequence QTQTHNKS. Residue asparagine 937 is glycosylated (N-linked (GlcNAc...) asparagine). A helical transmembrane segment spans residues 940–960; that stretch reads ICTTTTAFLHFFFLASFCWVL. Over 961–981 the chain is Cytoplasmic; the sequence is TEAWQSYMAVTGKIRTRLIRK. Residues 982–1002 form a helical membrane-spanning segment; sequence RFLCLGWGLPALVVATSVGFT. Residues 1003–1023 lie on the Extracellular side of the membrane; the sequence is RTKGYGTDHYCWLSLEGGLLY. A helical membrane pass occupies residues 1024–1044; that stretch reads AFVGPAAAVVLVNMVIGILVF. The Cytoplasmic portion of the chain corresponds to 1045–1098; the sequence is NKLVSRDGILDKKLKHRAGQMSEPHSGLTLKCAKCGVVSTTALSATTASNAMAS. Residues 1099–1119 form a helical membrane-spanning segment; sequence LWSSCVVLPLLALTWMSAVLA. Residues 1120 to 1125 are Extracellular-facing; it reads MTDKRS. The helical transmembrane segment at 1126–1146 threads the bilayer; it reads ILFQILFAVFDSLQGFVIVMV. The Cytoplasmic portion of the chain corresponds to 1147–1522; that stretch reads HCILRREVQD…VQEGDFQTEV (376 aa). Phosphoserine occurs at positions 1220 and 1411.

This sequence belongs to the G-protein coupled receptor 2 family. Adhesion G-protein coupled receptor (ADGR) subfamily. As to quaternary structure, forms a heterodimer, consisting of a large extracellular region non-covalently linked to a seven-transmembrane moiety. Interacts (via its TSRs) with C1QL1, C1QL2, C1QL3 and C1QL4. Interacts via (C-terminus) with ELMO1, ELMO2 and ELMO3. The endogenous protein is proteolytically cleaved into 2 subunits, an extracellular subunit and a seven-transmembrane subunit. Brain-specific expression.

It localises to the cell membrane. Its function is as follows. Receptor that plays a role in the regulation of synaptogenesis and dendritic spine formation at least partly via interaction with ELMO1 and RAC1 activity. Promotes myoblast fusion through ELMO/DOCK1. The sequence is that of Adhesion G protein-coupled receptor B3 (Adgrb3) from Mus musculus (Mouse).